The primary structure comprises 304 residues: Lipoyl synthase (304 aa).

Positions 1–21 are disordered; it reads MAPELIQIDLEPRKPAPKPSW. Positions 48, 53, 59, 74, 78, 81, and 287 each coordinate [4Fe-4S] cluster. Positions 60 to 276 constitute a Radical SAM core domain; the sequence is WNHKTATFML…KEEAMKMGFR (217 aa).

This sequence belongs to the radical SAM superfamily. Lipoyl synthase family. The cofactor is [4Fe-4S] cluster.

It is found in the cytoplasm. The catalysed reaction is [[Fe-S] cluster scaffold protein carrying a second [4Fe-4S](2+) cluster] + N(6)-octanoyl-L-lysyl-[protein] + 2 oxidized [2Fe-2S]-[ferredoxin] + 2 S-adenosyl-L-methionine + 4 H(+) = [[Fe-S] cluster scaffold protein] + N(6)-[(R)-dihydrolipoyl]-L-lysyl-[protein] + 4 Fe(3+) + 2 hydrogen sulfide + 2 5'-deoxyadenosine + 2 L-methionine + 2 reduced [2Fe-2S]-[ferredoxin]. Its pathway is protein modification; protein lipoylation via endogenous pathway; protein N(6)-(lipoyl)lysine from octanoyl-[acyl-carrier-protein]: step 2/2. Functionally, catalyzes the radical-mediated insertion of two sulfur atoms into the C-6 and C-8 positions of the octanoyl moiety bound to the lipoyl domains of lipoate-dependent enzymes, thereby converting the octanoylated domains into lipoylated derivatives. The protein is Lipoyl synthase of Koribacter versatilis (strain Ellin345).